A 333-amino-acid chain; its full sequence is Tetraacyldisaccharide 4'-kinase (333 aa).

An ATP-binding site is contributed by 60 to 67 (TVGGTGKT).

Belongs to the LpxK family.

It carries out the reaction a lipid A disaccharide + ATP = a lipid IVA + ADP + H(+). It functions in the pathway glycolipid biosynthesis; lipid IV(A) biosynthesis; lipid IV(A) from (3R)-3-hydroxytetradecanoyl-[acyl-carrier-protein] and UDP-N-acetyl-alpha-D-glucosamine: step 6/6. Functionally, transfers the gamma-phosphate of ATP to the 4'-position of a tetraacyldisaccharide 1-phosphate intermediate (termed DS-1-P) to form tetraacyldisaccharide 1,4'-bis-phosphate (lipid IVA). This is Tetraacyldisaccharide 4'-kinase from Pseudomonas putida (strain GB-1).